We begin with the raw amino-acid sequence, 356 residues long: Galectin-9C (356 aa).

The region spanning 17–148 (FSGTIQGGLQ…SVQLSYISFQ (132 aa)) is the Galectin 1 domain. An a beta-D-galactoside-binding site is contributed by 82 to 88 (WGPEERK). Residues 170–190 (FPPRPRGRRQKPPSVRPANPA) form a disordered region. One can recognise a Galectin 2 domain in the interval 228 to 356 (FITTIPGGLY…GDIQLTHVQT (129 aa)). A beta-D-galactoside is bound at residue 288 to 294 (WGSEERS).

In terms of biological role, binds galactosides. The protein is Galectin-9C (LGALS9C) of Homo sapiens (Human).